The following is a 211-amino-acid chain: Probable GTP-binding protein EngB (211 aa).

Residues 26–200 enclose the EngB-type G domain; that stretch reads SGIEIAFAGR…RQKLDDWFAA (175 aa). GTP-binding positions include 34–41, 61–65, 79–82, 146–149, and 179–181; these read GRSNAGKS, GRTRL, DLPG, TKAD, and FSS. Ser41 and Thr63 together coordinate Mg(2+).

The protein belongs to the TRAFAC class TrmE-Era-EngA-EngB-Septin-like GTPase superfamily. EngB GTPase family. It depends on Mg(2+) as a cofactor.

Functionally, necessary for normal cell division and for the maintenance of normal septation. The protein is Probable GTP-binding protein EngB of Sodalis glossinidius (strain morsitans).